The following is a 152-amino-acid chain: Superoxide dismutase [Cu-Zn] (152 aa).

Residues histidine 45, histidine 47, and histidine 62 each contribute to the Cu cation site. A disulfide bond links cysteine 56 and cysteine 145. Histidine 62, histidine 70, histidine 79, and aspartate 82 together coordinate Zn(2+). Residue histidine 119 participates in Cu cation binding.

Belongs to the Cu-Zn superoxide dismutase family. In terms of assembly, homodimer. Cu cation is required as a cofactor. The cofactor is Zn(2+).

The protein resides in the cytoplasm. It catalyses the reaction 2 superoxide + 2 H(+) = H2O2 + O2. Functionally, destroys radicals which are normally produced within the cells and which are toxic to biological systems. The protein is Superoxide dismutase [Cu-Zn] (SODCC) of Brassica oleracea var. capitata (Cabbage).